The primary structure comprises 246 residues: MRYDGRKNNELRPVTMDLDFITHPEGSVLITVGGTKVICNASVEDRVPPFLRGEGKGWITAEYSMLPRATNQRTIRESSKGKISGRTMEIQRLIGRALRAVVDLEKLGERTIWIDCDVIQADGGTRTASITGAFTAMALAVGRLVEKGALKEMPITDFLAATSVGIDKEKGLILDLNYQEDSAAEVDMNVVMTGEGRFVELQGTGEEATFSRSELDGLLELAEKGIAELLEKQKEVLGDVALSIQQ.

Residues Arg86 and 124–126 contribute to the phosphate site; that span reads GTR.

This sequence belongs to the RNase PH family. As to quaternary structure, homohexameric ring arranged as a trimer of dimers.

The catalysed reaction is tRNA(n+1) + phosphate = tRNA(n) + a ribonucleoside 5'-diphosphate. In terms of biological role, phosphorolytic 3'-5' exoribonuclease that plays an important role in tRNA 3'-end maturation. Removes nucleotide residues following the 3'-CCA terminus of tRNAs; can also add nucleotides to the ends of RNA molecules by using nucleoside diphosphates as substrates, but this may not be physiologically important. Probably plays a role in initiation of 16S rRNA degradation (leading to ribosome degradation) during starvation. In Bacillus licheniformis (strain ATCC 14580 / DSM 13 / JCM 2505 / CCUG 7422 / NBRC 12200 / NCIMB 9375 / NCTC 10341 / NRRL NRS-1264 / Gibson 46), this protein is Ribonuclease PH.